A 379-amino-acid chain; its full sequence is Alanine racemase (379 aa).

Lys37 serves as the catalytic Proton acceptor; specific for D-alanine. N6-(pyridoxal phosphate)lysine is present on Lys37. Arg139 lines the substrate pocket. Tyr266 functions as the Proton acceptor; specific for L-alanine in the catalytic mechanism. Met314 provides a ligand contact to substrate.

This sequence belongs to the alanine racemase family. Pyridoxal 5'-phosphate is required as a cofactor.

The catalysed reaction is L-alanine = D-alanine. The protein operates within amino-acid biosynthesis; D-alanine biosynthesis; D-alanine from L-alanine: step 1/1. In terms of biological role, catalyzes the interconversion of L-alanine and D-alanine. May also act on other amino acids. This chain is Alanine racemase (alr), found in Sorangium cellulosum (strain So ce56) (Polyangium cellulosum (strain So ce56)).